Reading from the N-terminus, the 831-residue chain is Periplasmic nitrate reductase (831 aa).

A signal peptide (tat-type signal) is located at residues 1–29 (MKISRRDFIKQTAITATASVAGVTLPAGA). Residues 41–97 (LKWSKAPCRFCGTGCGVTVAVKDNKVVATQGDPQAEVNKGLNCVKGYFLSKIMYGQD) form the 4Fe-4S Mo/W bis-MGD-type domain. Cys-48, Cys-51, Cys-55, and Cys-83 together coordinate [4Fe-4S] cluster. Mo-bis(molybdopterin guanine dinucleotide) is bound by residues Lys-85, Gln-152, Asn-177, Cys-181, 214–221 (WGSNMAEM), 245–249 (STFTH), 264–266 (QTD), Met-375, Gln-379, Asn-485, 511–512 (SD), Lys-534, Asp-561, and 721–730 (TGRVLEHWHS). Trp-797 contributes to the substrate binding site. Residues Asn-805 and Lys-822 each coordinate Mo-bis(molybdopterin guanine dinucleotide).

It belongs to the prokaryotic molybdopterin-containing oxidoreductase family. NasA/NapA/NarB subfamily. As to quaternary structure, component of the periplasmic nitrate reductase NapAB complex composed of NapA and NapB. Requires [4Fe-4S] cluster as cofactor. It depends on Mo-bis(molybdopterin guanine dinucleotide) as a cofactor. Predicted to be exported by the Tat system. The position of the signal peptide cleavage has been experimentally proven.

It localises to the periplasm. The catalysed reaction is 2 Fe(II)-[cytochrome] + nitrate + 2 H(+) = 2 Fe(III)-[cytochrome] + nitrite + H2O. Catalytic subunit of the periplasmic nitrate reductase complex NapAB. Receives electrons from NapB and catalyzes the reduction of nitrate to nitrite. In Cupriavidus necator (strain ATCC 17699 / DSM 428 / KCTC 22496 / NCIMB 10442 / H16 / Stanier 337) (Ralstonia eutropha), this protein is Periplasmic nitrate reductase.